A 408-amino-acid chain; its full sequence is LL-diaminopimelate aminotransferase (408 aa).

Residues Y15 and G42 each contribute to the substrate site. Pyridoxal 5'-phosphate contacts are provided by residues Y72, 108–109, Y132, N187, Y218, and 246–248; these read SK and SFS. K109, Y132, and N187 together coordinate substrate. K249 carries the post-translational modification N6-(pyridoxal phosphate)lysine. 2 residues coordinate pyridoxal 5'-phosphate: R257 and N292. Substrate is bound by residues N292 and R388.

This sequence belongs to the class-I pyridoxal-phosphate-dependent aminotransferase family. LL-diaminopimelate aminotransferase subfamily. In terms of assembly, homodimer. Pyridoxal 5'-phosphate is required as a cofactor.

The enzyme catalyses (2S,6S)-2,6-diaminopimelate + 2-oxoglutarate = (S)-2,3,4,5-tetrahydrodipicolinate + L-glutamate + H2O + H(+). It functions in the pathway amino-acid biosynthesis; L-lysine biosynthesis via DAP pathway; LL-2,6-diaminopimelate from (S)-tetrahydrodipicolinate (aminotransferase route): step 1/1. Involved in the synthesis of meso-diaminopimelate (m-DAP or DL-DAP), required for both lysine and peptidoglycan biosynthesis. Catalyzes the direct conversion of tetrahydrodipicolinate to LL-diaminopimelate. In Prochlorococcus marinus (strain MIT 9303), this protein is LL-diaminopimelate aminotransferase.